A 504-amino-acid chain; its full sequence is Anthocyanidin 3-O-glucoside 5-O-glucosyltransferase (504 aa).

Histidine 23 (proton acceptor) is an active-site residue. Histidine 23 serves as a coordination point for an anthocyanidin. The interval 107–126 (TKKGQGQGQGQGQGQGQGQG) is disordered. The segment covering 111-125 (QGQGQGQGQGQGQGQ) has biased composition (gly residues). UDP-alpha-D-glucose is bound by residues threonine 157, glutamine 377, histidine 392, tryptophan 395, asparagine 396, serine 397, glutamate 400, aspartate 416, and glutamine 417.

The protein belongs to the UDP-glycosyltransferase family. Predominantly expressed in petals and weakly in filaments. Not expressed in leaves, stems and other floral organs.

It catalyses the reaction an anthocyanidin 3-O-beta-D-glucoside + UDP-alpha-D-glucose = an anthocyanidin 3,5-di-O-beta-D-glucoside + UDP + 2 H(+). The protein operates within pigment biosynthesis; anthocyanin biosynthesis. Its function is as follows. Catalyzes the glucosylation at the O-5 position of anthocyanidin 3-glucosides to form anthocyanidin 3,5-di-O-glucosides using UDP-glucose as sugar donor. Anthocyanidin 3,5-di-O-glucosides are molecules that are responsible for pigmentation. Involved in biosynsthesis of accumulate gentiodelphin, a unique polyacylated delphinidin-type anthocyanin, in the petals. Also acts on anthocyanidin 3-O-(6-O-malonylglucoside). Much less active with hydroxycinnamoylglucose derivatives. No activity in the absence of the 3-O-glucoside group. This Gentiana triflora (Clustered gentian) protein is Anthocyanidin 3-O-glucoside 5-O-glucosyltransferase (5GT7).